The chain runs to 95 residues: uncharacterized protein (95 aa).

Residues 29 to 53 (LVSTATCMAALFLRFKLIAWVAFIL) form a helical membrane-spanning segment.

Its subcellular location is the membrane. This is an uncharacterized protein from Schizosaccharomyces pombe (strain 972 / ATCC 24843) (Fission yeast).